Here is a 62-residue protein sequence, read N- to C-terminus: Bacteriocin pediocin PA-1 (62 aa).

A propeptide spanning residues 1–18 (MKKIEKLTEKEMANIIGG) is cleaved from the precursor. Disulfide bonds link C27–C32 and C42–C62. The tract at residues 40-52 (TTCIINNGAMAWA) is hydrophobic.

Belongs to the bacteriocin class IIA/YGNGV family.

Its subcellular location is the secreted. Bactericidal activity (effective inhibitor of L.monocytogenes). This Pediococcus acidilactici protein is Bacteriocin pediocin PA-1 (pedA).